Here is a 246-residue protein sequence, read N- to C-terminus: Probable transcriptional regulatory protein KPK_1906 (246 aa).

This sequence belongs to the TACO1 family.

Its subcellular location is the cytoplasm. The chain is Probable transcriptional regulatory protein KPK_1906 from Klebsiella pneumoniae (strain 342).